The sequence spans 353 residues: 3'(2'),5'-bisphosphate nucleotidase 1 (353 aa).

The Proton acceptor role is filled by Asp46. Positions 71, 134, 136, and 137 each coordinate Mg(2+). The active-site Proton acceptor is Thr139. Adenosine 3',5'-bisphosphate-binding residues include Thr139, His235, Ser259, Lys262, Arg276, and Asp288. AMP contacts are provided by His235, Ser259, Lys262, Arg276, and Asp288. Residue Asp288 participates in Mg(2+) binding.

The protein belongs to the inositol monophosphatase superfamily. Mg(2+) is required as a cofactor. In terms of tissue distribution, expressed in roots, leaves, stems, flowers and siliques.

It carries out the reaction 3'-phosphoadenylyl sulfate + H2O = adenosine 5'-phosphosulfate + phosphate. The enzyme catalyses adenosine 3',5'-bisphosphate + H2O = AMP + phosphate. The catalysed reaction is adenosine 2',5'-bisphosphate + H2O = AMP + phosphate. It catalyses the reaction 1D-myo-inositol 1,4-bisphosphate + H2O = 1D-myo-inositol 4-phosphate + phosphate. It carries out the reaction 1D-myo-inositol 1,3,4-trisphosphate + H2O = 1D-myo-inositol 3,4-bisphosphate + phosphate. It functions in the pathway signal transduction; phosphatidylinositol signaling pathway. Inhibited non-competitively by Li(+) (IC(50)=0.20 mM) and Na(+) (IC(50)=200 mM). Functionally, phosphatase that converts adenosine 3'-phosphate 5'-phosphosulfate (PAPS) to adenosine 5'-phosphosulfate (APS) and 3'(2')-phosphoadenosine 5'-phosphate (PAP) to AMP. May regulate the flux of sulfur in the sulfur-activation pathway by converting PAPS to APS. May play a role in the biosynthesis of sulfate conjugates and RNA processing. Is also able to hydrolyze inositol 1,4-bisphosphate and inositol 1,3,4-trisphosphate. Could be considered as a negative regulator of abscisic acid (ABA)- and stress-responsive genes, through modulating the inositol 1,4,5-trisphosphate (IP3) turnover. Is also involved in salt tolerance. Acts as a suppressor of virus- and transgene-induced silencing. This Arabidopsis thaliana (Mouse-ear cress) protein is 3'(2'),5'-bisphosphate nucleotidase 1.